The chain runs to 212 residues: Protein YIPF5 homolog (212 aa).

The Cytoplasmic segment spans residues 1 to 79; it reads MNNNNSFNFI…KKIDSHIMDD (79 aa). A helical transmembrane segment spans residues 80–100; it reads TDLGGPILFGLLLGFSLLMSG. Lysine 101 is a topological domain (lumenal). The helical transmembrane segment at 102 to 122 threads the bilayer; sequence IQFGYIYGLGLIGCVSMYIVL. Residues 123–128 are Cytoplasmic-facing; the sequence is NLMSEK. Residues 129–149 form a helical membrane-spanning segment; the sequence is GIDIYRVISVLGYCLLPMIFL. At 150–163 the chain is on the lumenal side; it reads SFTSLIININGMVG. A helical membrane pass occupies residues 164-186; it reads YILIGFAIVWSTYSASKMFVKVL. Residues 187–191 lie on the Cytoplasmic side of the membrane; it reads SMIDQ. A helical transmembrane segment spans residues 192-212; that stretch reads RILVAYPVGLLYTGFALITAF.

The protein belongs to the YIP1 family.

It is found in the endoplasmic reticulum membrane. The protein localises to the golgi apparatus. Its subcellular location is the cis-Golgi network membrane. In terms of biological role, plays a role in transport between endoplasmic reticulum and Golgi. This is Protein YIPF5 homolog (yipf5) from Dictyostelium discoideum (Social amoeba).